The primary structure comprises 141 residues: Nucleoside diphosphate kinase (141 aa).

6 residues coordinate ATP: lysine 11, phenylalanine 59, arginine 87, threonine 93, arginine 104, and asparagine 114. The Pros-phosphohistidine intermediate role is filled by histidine 117.

Belongs to the NDK family. As to quaternary structure, homotetramer. The cofactor is Mg(2+).

The protein localises to the cytoplasm. The enzyme catalyses a 2'-deoxyribonucleoside 5'-diphosphate + ATP = a 2'-deoxyribonucleoside 5'-triphosphate + ADP. It carries out the reaction a ribonucleoside 5'-diphosphate + ATP = a ribonucleoside 5'-triphosphate + ADP. In terms of biological role, major role in the synthesis of nucleoside triphosphates other than ATP. The ATP gamma phosphate is transferred to the NDP beta phosphate via a ping-pong mechanism, using a phosphorylated active-site intermediate. This is Nucleoside diphosphate kinase from Pseudomonas fluorescens (strain SBW25).